The following is a 419-amino-acid chain: D(4) dopamine receptor (419 aa).

Topologically, residues 1 to 29 (MGNRSTADADGLLAGRGPAAGASAGASAG) are extracellular. N3 carries an N-linked (GlcNAc...) asparagine glycan. Residues 30 to 50 (LAGQGAAALVGGVLLIGAVLA) traverse the membrane as a helical segment. The Cytoplasmic portion of the chain corresponds to 51-71 (GNSLVCVSVATERALQTPTNS). The chain crosses the membrane as a helical span at residues 72–92 (FIVSLAAADLLLALLVLPLFV). D80 is a binding site for Na(+). The Extracellular portion of the chain corresponds to 93 to 110 (YSEVQGGAWLLSPRLCDA). C108 and C185 form a disulfide bridge. Residues 111 to 131 (LMAMDVMLCTASIFNLCAISV) form a helical membrane-spanning segment. D115 is a (2R,3R)-nemonapride binding site. Residue S122 participates in Na(+) binding. Residues 132–152 (DRFVAVAVPLRYNRQGGSRRQ) are Cytoplasmic-facing. The helical transmembrane segment at 153 to 173 (LLLIGATWLLSAAVAAPVLCG) threads the bilayer. Residues 174 to 192 (LNDVRGRDPAVCRLEDRDY) are Extracellular-facing. The chain crosses the membrane as a helical span at residues 193 to 213 (VVYSSVCSFFLPCPLMLLLYW). Position 196 (S196) interacts with (2R,3R)-nemonapride. The Cytoplasmic portion of the chain corresponds to 214–346 (ATFRGLQRWE…ITGRERKAMR (133 aa)). The segment at 230–264 (LHGRAPRRPSGPGPPSPTPPAPRLPQDPCGPDCAP) is disordered. The segment covering 238–254 (PSGPGPPSPTPPAPRLP) has biased composition (pro residues). A 1; approximate repeat occupies 249–264 (PAPRLPQDPCGPDCAP). The interval 249-312 (PAPRLPQDPC…PDPCGSNCAP (64 aa)) is 4 X 16 AA approximate tandem repeats of [PA]-A-P-G-L-P-[PQR]-[DG]-P-C-G-P-D-C-A-P. 2 tandem repeats follow at residues 265–280 (PAPG…DCAP) and 281–296 (AAPS…DCAP). The 4; approximate repeat unit spans residues 297-312 (PAPGLPPDPCGSNCAP). A disordered region spans residues 317-336 (RAAALPPQTPPQTRRRRRAK). The chain crosses the membrane as a helical span at residues 347–367 (VLPVVVGAFLLCWTPFFVVHI). Over 368 to 382 (TQALCPACSVPPRLV) the chain is Extracellular. A disulfide bond links C372 and C375. The helical transmembrane segment at 383–403 (SAVTWLGYVNSALNPVIYTVF) threads the bilayer. Residues 404-419 (NAEFRNVFRKALRACC) lie on the Cytoplasmic side of the membrane. C419 is lipidated: S-palmitoyl cysteine.

Belongs to the G-protein coupled receptor 1 family. As to quaternary structure, forms homo- and heterooligomers with DRD2. D4.7 allele exhibits higher affinity for homodimers compared to DRD2 heterodimers, while alleles D42. and 4.4 have similar affinities for both. The interaction with DRD2 may modulate agonist-induced downstream signaling. Interacts with CLIC6. Interacts with GPRASP1. May interact with ADORA2A. Interacts with KLHL12. Polyubiquitinated by the BCR(KLHL12) E3 ubiquitin ligase complex: polyubiquitination does not lead to degradation of DRD4 protein. Post-translationally, palmitoylated. Palmitoylation of the C-terminal Cys is important for normal expression at the cell membrane. Highly expressed in retina. Detected at much lower levels in brain, in amygdala, thalamus, hypothalamus, cerebellum and pituitary.

It is found in the cell membrane. Its activity is regulated as follows. Signaling in response to agonists such as dopamine, epinephrine and norepinephrine is modulated by Na(+); lower Na(+) levels result in higher receptor activity (in vitro). Dopamine receptor responsible for neuronal signaling in the mesolimbic system of the brain, an area of the brain that regulates emotion and complex behavior. Activated by dopamine, but also by epinephrine and norepinephrine, and by numerous synthetic agonists and drugs. Agonist binding triggers signaling via G proteins that inhibit adenylyl cyclase. Modulates the circadian rhythm of contrast sensitivity by regulating the rhythmic expression of NPAS2 in the retinal ganglion cells. In Homo sapiens (Human), this protein is D(4) dopamine receptor (DRD4).